Reading from the N-terminus, the 270-residue chain is Acyl-[acyl-carrier-protein]--UDP-N-acetylglucosamine O-acyltransferase (270 aa).

Belongs to the transferase hexapeptide repeat family. LpxA subfamily. In terms of assembly, homotrimer.

It is found in the cytoplasm. The catalysed reaction is a (3R)-hydroxyacyl-[ACP] + UDP-N-acetyl-alpha-D-glucosamine = a UDP-3-O-[(3R)-3-hydroxyacyl]-N-acetyl-alpha-D-glucosamine + holo-[ACP]. The protein operates within glycolipid biosynthesis; lipid IV(A) biosynthesis; lipid IV(A) from (3R)-3-hydroxytetradecanoyl-[acyl-carrier-protein] and UDP-N-acetyl-alpha-D-glucosamine: step 1/6. Its function is as follows. Involved in the biosynthesis of lipid A, a phosphorylated glycolipid that anchors the lipopolysaccharide to the outer membrane of the cell. In Bartonella tribocorum (strain CIP 105476 / IBS 506), this protein is Acyl-[acyl-carrier-protein]--UDP-N-acetylglucosamine O-acyltransferase.